Here is a 334-residue protein sequence, read N- to C-terminus: Ferredoxin--NADP reductase (334 aa).

Positions 33, 41, 46, 86, 120, 286, and 327 each coordinate FAD.

This sequence belongs to the ferredoxin--NADP reductase type 2 family. Homodimer. FAD serves as cofactor.

It catalyses the reaction 2 reduced [2Fe-2S]-[ferredoxin] + NADP(+) + H(+) = 2 oxidized [2Fe-2S]-[ferredoxin] + NADPH. The chain is Ferredoxin--NADP reductase from Rickettsia typhi (strain ATCC VR-144 / Wilmington).